The following is a 223-amino-acid chain: 2-C-methyl-D-erythritol 4-phosphate cytidylyltransferase (223 aa).

Belongs to the IspD/TarI cytidylyltransferase family. IspD subfamily.

It carries out the reaction 2-C-methyl-D-erythritol 4-phosphate + CTP + H(+) = 4-CDP-2-C-methyl-D-erythritol + diphosphate. Its pathway is isoprenoid biosynthesis; isopentenyl diphosphate biosynthesis via DXP pathway; isopentenyl diphosphate from 1-deoxy-D-xylulose 5-phosphate: step 2/6. In terms of biological role, catalyzes the formation of 4-diphosphocytidyl-2-C-methyl-D-erythritol from CTP and 2-C-methyl-D-erythritol 4-phosphate (MEP). This Prochlorococcus marinus subsp. pastoris (strain CCMP1986 / NIES-2087 / MED4) protein is 2-C-methyl-D-erythritol 4-phosphate cytidylyltransferase.